The sequence spans 295 residues: Nicotinate-nucleotide pyrophosphorylase [carboxylating] (295 aa).

Residues Arg107, 142 to 144 (TRK), Arg166, Lys176, Glu206, Asp227, and 256 to 258 (SGG) contribute to the substrate site.

Belongs to the NadC/ModD family. Hexamer formed by 3 homodimers.

The protein localises to the cytoplasm. It localises to the nucleus. The catalysed reaction is nicotinate beta-D-ribonucleotide + CO2 + diphosphate = quinolinate + 5-phospho-alpha-D-ribose 1-diphosphate + 2 H(+). The protein operates within cofactor biosynthesis; NAD(+) biosynthesis; nicotinate D-ribonucleotide from quinolinate: step 1/1. Involved in the catabolism of quinolinic acid (QA). In Saccharomyces cerevisiae (strain ATCC 204508 / S288c) (Baker's yeast), this protein is Nicotinate-nucleotide pyrophosphorylase [carboxylating] (BNA6).